The following is a 330-amino-acid chain: MATTKISSTKSTSRAINYAEKRAEEKSALNCDIDYAKSSFKATREMYGKTDGNEGHVVIQSFKPNEVTPEQCNQLGLELAEKIAPNHQVAVYTHNDTDHVHNHIVINSIDLETGKKFNNNKKALHDIRQANDEICVSHNLSIPEEKAKLRYTQAEYSVLNKGKTSWKDEIRHAIDQSQAASYEELGNDLQQNGIKIERITDKTITYRHLEEDKKVRGKKLGEDYDKGGLEIGFNRQNEQREEQARQRELEQARREKIKRDKEREKEWARFNRSTQAIRQNRERSEREERERERKARELEEQNRRAREERARQERENKHTHEKTRGFDLEL.

Positions 220-330 are disordered; that stretch reads LGEDYDKGGL…EKTRGFDLEL (111 aa). 2 stretches are compositionally biased toward basic and acidic residues: residues 237-269 and 279-330; these read NEQR…EWAR and QNRE…DLEL.

This protein is probably required for relaxation complex formation and plasmid mobilization by conjugative plasmids. This is Protein rlx (rlx) from Staphylococcus aureus.